Consider the following 366-residue polypeptide: UDP-N-acetylglucosamine--N-acetylmuramyl-(pentapeptide) pyrophosphoryl-undecaprenol N-acetylglucosamine transferase (366 aa).

Residues 14 to 16 (TGG), Asn-125, Arg-168, Ser-196, and Gln-297 each bind UDP-N-acetyl-alpha-D-glucosamine.

This sequence belongs to the glycosyltransferase 28 family. MurG subfamily.

It localises to the cell inner membrane. The enzyme catalyses di-trans,octa-cis-undecaprenyl diphospho-N-acetyl-alpha-D-muramoyl-L-alanyl-D-glutamyl-meso-2,6-diaminopimeloyl-D-alanyl-D-alanine + UDP-N-acetyl-alpha-D-glucosamine = di-trans,octa-cis-undecaprenyl diphospho-[N-acetyl-alpha-D-glucosaminyl-(1-&gt;4)]-N-acetyl-alpha-D-muramoyl-L-alanyl-D-glutamyl-meso-2,6-diaminopimeloyl-D-alanyl-D-alanine + UDP + H(+). Its pathway is cell wall biogenesis; peptidoglycan biosynthesis. Functionally, cell wall formation. Catalyzes the transfer of a GlcNAc subunit on undecaprenyl-pyrophosphoryl-MurNAc-pentapeptide (lipid intermediate I) to form undecaprenyl-pyrophosphoryl-MurNAc-(pentapeptide)GlcNAc (lipid intermediate II). The sequence is that of UDP-N-acetylglucosamine--N-acetylmuramyl-(pentapeptide) pyrophosphoryl-undecaprenol N-acetylglucosamine transferase from Rhodopseudomonas palustris (strain ATCC BAA-98 / CGA009).